A 126-amino-acid chain; its full sequence is Small ribosomal subunit protein uS13 (126 aa).

Residues 98-126 (PVRGQSTKNNARTRKGRKKTVANKKKATK) are disordered. The segment covering 108–126 (ARTRKGRKKTVANKKKATK) has biased composition (basic residues).

This sequence belongs to the universal ribosomal protein uS13 family. In terms of assembly, part of the 30S ribosomal subunit. Forms a loose heterodimer with protein S19. Forms two bridges to the 50S subunit in the 70S ribosome.

Located at the top of the head of the 30S subunit, it contacts several helices of the 16S rRNA. In the 70S ribosome it contacts the 23S rRNA (bridge B1a) and protein L5 of the 50S subunit (bridge B1b), connecting the 2 subunits; these bridges are implicated in subunit movement. Contacts the tRNAs in the A and P-sites. In Phocaeicola vulgatus (strain ATCC 8482 / DSM 1447 / JCM 5826 / CCUG 4940 / NBRC 14291 / NCTC 11154) (Bacteroides vulgatus), this protein is Small ribosomal subunit protein uS13.